Here is a 433-residue protein sequence, read N- to C-terminus: Enolase (433 aa).

Gln167 serves as a coordination point for (2R)-2-phosphoglycerate. Glu209 acts as the Proton donor in catalysis. Mg(2+) is bound by residues Asp246, Glu291, and Asp318. Residues Lys343, Arg372, Ser373, and Lys394 each contribute to the (2R)-2-phosphoglycerate site. Lys343 serves as the catalytic Proton acceptor.

The protein belongs to the enolase family. In terms of assembly, component of the RNA degradosome, a multiprotein complex involved in RNA processing and mRNA degradation. Mg(2+) serves as cofactor.

The protein resides in the cytoplasm. Its subcellular location is the secreted. It is found in the cell surface. The enzyme catalyses (2R)-2-phosphoglycerate = phosphoenolpyruvate + H2O. Its pathway is carbohydrate degradation; glycolysis; pyruvate from D-glyceraldehyde 3-phosphate: step 4/5. Catalyzes the reversible conversion of 2-phosphoglycerate (2-PG) into phosphoenolpyruvate (PEP). It is essential for the degradation of carbohydrates via glycolysis. This is Enolase from Vibrio vulnificus (strain YJ016).